We begin with the raw amino-acid sequence, 239 residues long: Ras-like protein B (239 aa).

GTP-binding positions include 13–18, 29–35, 59–60, 139–142, and 169–171; these read GVGKTA, VETYDPT, AG, NKSD, and SAK. Residues 32-40 carry the Effector region motif; the sequence is YDPTIEDSY. Residues 191 to 227 are disordered; that stretch reads RQQQQGGRAQDRRPTGLGPMRDRDAGPEYPKTFRPDR. Over residues 199-226 the composition is skewed to basic and acidic residues; sequence AQDRRPTGLGPMRDRDAGPEYPKTFRPD.

The protein belongs to the small GTPase superfamily. Ras family. Interacts with mpkA.

It catalyses the reaction GTP + H2O = GDP + phosphate + H(+). Ras-like protein involved in the activation of Ras protein signal transduction. Ras proteins bind GDP/GTP and possess intrinsic GTPase activity. Plays a role in hyphal morphology and conidiophore development. Required for full virulence. In Aspergillus fumigatus (strain ATCC MYA-4609 / CBS 101355 / FGSC A1100 / Af293) (Neosartorya fumigata), this protein is Ras-like protein B.